The following is a 308-amino-acid chain: Uridine diphosphate glucose pyrophosphatase NUDT22 (308 aa).

7 residues coordinate substrate: phenylalanine 56, tyrosine 86, arginine 138, alanine 143, aspartate 150, histidine 155, and glutamate 157. Residues 117–284 enclose the Nudix hydrolase domain; that stretch reads ADPLGVGAAL…KGAILLYNRH (168 aa). The Nudix box signature appears at 174-195; it reads GLLVVRELFSSVLQEICDEVNL. Mg(2+)-binding residues include glutamate 188 and glutamate 192. Serine 273 is a binding site for substrate.

It belongs to the Nudix hydrolase family. Mg(2+) is required as a cofactor.

It catalyses the reaction UDP-sugar + H2O = UMP + alpha-D-aldose 1-phosphate.. Hydrolyzes UDP-glucose to glucose 1-phosphate and UMP and UDP-galactose to galactose 1-phosphate and UMP. Preferred substrate is UDP-glucose. This is Uridine diphosphate glucose pyrophosphatase NUDT22 (Nudt22) from Mus musculus (Mouse).